Consider the following 488-residue polypeptide: Galactose-1-phosphate uridylyltransferase (488 aa).

This sequence belongs to the galactose-1-phosphate uridylyltransferase type 2 family.

The protein resides in the cytoplasm. The catalysed reaction is alpha-D-galactose 1-phosphate + UDP-alpha-D-glucose = alpha-D-glucose 1-phosphate + UDP-alpha-D-galactose. It participates in carbohydrate metabolism; galactose metabolism. The polypeptide is Galactose-1-phosphate uridylyltransferase (galT) (Lactobacillus helveticus (Lactobacillus suntoryeus)).